Consider the following 206-residue polypeptide: Small ribosomal subunit protein uS4 (206 aa).

The segment covering 25–39 (DKLLDRKPNGPGKER) has biased composition (basic and acidic residues). The interval 25-49 (DKLLDRKPNGPGKERGARKRGKTSV) is disordered. An S4 RNA-binding domain is found at 95–157 (QRLDNTIYRM…KGIQNLIRHN (63 aa)).

This sequence belongs to the universal ribosomal protein uS4 family. In terms of assembly, part of the 30S ribosomal subunit. Contacts protein S5. The interaction surface between S4 and S5 is involved in control of translational fidelity.

Functionally, one of the primary rRNA binding proteins, it binds directly to 16S rRNA where it nucleates assembly of the body of the 30S subunit. With S5 and S12 plays an important role in translational accuracy. This is Small ribosomal subunit protein uS4 from Treponema denticola (strain ATCC 35405 / DSM 14222 / CIP 103919 / JCM 8153 / KCTC 15104).